Here is a 211-residue protein sequence, read N- to C-terminus: BAG family molecular chaperone regulator 2 (211 aa).

Ala2 bears the N-acetylalanine mark. A phosphoserine mark is found at Ser20, Ser31, and Ser73. A coiled-coil region spans residues 20–61 (SMADRSSRLLESLDQLELRVEALREAATAVEQEKEVLLEMIH). The 81-residue stretch at 109 to 189 (SLKHATRIID…NIENADKAIK (81 aa)) folds into the BAG domain.

Binds to the ATPase domain of HSP/HSC70 chaperones. May interact with NWD1. Interacts with HSPA1A (via NBD), HSPA1B (via NBD) and HSPA8. May interact with DNJC9; the interaction seems to be histone-dependent.

Co-chaperone for HSP70 and HSC70 chaperone proteins. Acts as a nucleotide-exchange factor (NEF) promoting the release of ADP from the HSP70 and HSC70 proteins thereby triggering client/substrate protein release. The sequence is that of BAG family molecular chaperone regulator 2 from Bos taurus (Bovine).